Here is a 371-residue protein sequence, read N- to C-terminus: Poly(rC)-binding protein 3 (371 aa).

KH domains lie at 45 to 95 (TLTI…TITG), 129 to 182 (PVTL…TISG), and 293 to 357 (ASTH…QYLI).

In terms of tissue distribution, widely expressed, with highest levels in testis and fat tissues and lowest in heart.

Its subcellular location is the cytoplasm. In terms of biological role, single-stranded nucleic acid binding protein that binds preferentially to oligo dC. The sequence is that of Poly(rC)-binding protein 3 (Pcbp3) from Mus musculus (Mouse).